A 218-amino-acid polypeptide reads, in one-letter code: Kappa-scoloptoxin(11)-Ssd1b (218 aa).

The signal sequence occupies residues 1–16 (MFYSHLLFFTFTFACS). The propeptide occupies 17 to 25 (SSLNRKTKR).

Contains 8 disulfide bonds. As to expression, expressed by the venom gland.

The protein resides in the secreted. Its function is as follows. Voltage-gated potassium channel inhibitor. The sequence is that of Kappa-scoloptoxin(11)-Ssd1b from Scolopendra dehaani (Thai centipede).